Here is a 423-residue protein sequence, read N- to C-terminus: UPF0597 protein Emin_0811 (423 aa).

The protein belongs to the UPF0597 family.

The sequence is that of UPF0597 protein Emin_0811 from Elusimicrobium minutum (strain Pei191).